The chain runs to 241 residues: Methylthioribulose-1-phosphate dehydratase (241 aa).

Residues 1 to 17 (MAKQVENNNNDHLVQST) are compositionally biased toward polar residues. Residues 1-21 (MAKQVENNNNDHLVQSTDPEH) are disordered. Cys-100 contacts substrate. Residues His-117 and His-119 each contribute to the Zn(2+) site. Catalysis depends on Glu-146, which acts as the Proton donor/acceptor. Residue His-202 participates in Zn(2+) binding.

The protein belongs to the aldolase class II family. MtnB subfamily. Zn(2+) is required as a cofactor.

Its subcellular location is the cytoplasm. The enzyme catalyses 5-(methylsulfanyl)-D-ribulose 1-phosphate = 5-methylsulfanyl-2,3-dioxopentyl phosphate + H2O. It functions in the pathway amino-acid biosynthesis; L-methionine biosynthesis via salvage pathway; L-methionine from S-methyl-5-thio-alpha-D-ribose 1-phosphate: step 2/6. Its function is as follows. Catalyzes the dehydration of methylthioribulose-1-phosphate (MTRu-1-P) into 2,3-diketo-5-methylthiopentyl-1-phosphate (DK-MTP-1-P). The protein is Methylthioribulose-1-phosphate dehydratase of Aspergillus flavus (strain ATCC 200026 / FGSC A1120 / IAM 13836 / NRRL 3357 / JCM 12722 / SRRC 167).